The chain runs to 301 residues: Aspartate carbamoyltransferase catalytic subunit (301 aa).

Carbamoyl phosphate is bound by residues R54 and T55. Residue K82 participates in L-aspartate binding. Carbamoyl phosphate-binding residues include R104, H132, and Q135. Residues R165 and R217 each coordinate L-aspartate. Residues G257 and P258 each contribute to the carbamoyl phosphate site.

Belongs to the aspartate/ornithine carbamoyltransferase superfamily. ATCase family. In terms of assembly, heterododecamer (2C3:3R2) of six catalytic PyrB chains organized as two trimers (C3), and six regulatory PyrI chains organized as three dimers (R2).

It carries out the reaction carbamoyl phosphate + L-aspartate = N-carbamoyl-L-aspartate + phosphate + H(+). It participates in pyrimidine metabolism; UMP biosynthesis via de novo pathway; (S)-dihydroorotate from bicarbonate: step 2/3. Functionally, catalyzes the condensation of carbamoyl phosphate and aspartate to form carbamoyl aspartate and inorganic phosphate, the committed step in the de novo pyrimidine nucleotide biosynthesis pathway. This chain is Aspartate carbamoyltransferase catalytic subunit, found in Thermus aquaticus.